We begin with the raw amino-acid sequence, 586 residues long: Asparagine synthetase [glutamine-hydrolyzing] 2 (586 aa).

Cysteine 2 acts as the For GATase activity in catalysis. Residues 2 to 185 (CGILAVLGCS…PGHLYSSKEK (184 aa)) enclose the Glutamine amidotransferase type-2 domain. L-glutamine contacts are provided by residues 50 to 54 (RLAIV), 75 to 77 (NGE), and aspartate 98. The 324-residue stretch at 193-516 (PPWFSEAIPS…PQNSARLSVP (324 aa)) folds into the Asparagine synthetase domain. Residues leucine 231, valine 267, and 341–342 (SG) each bind ATP.

The enzyme catalyses L-aspartate + L-glutamine + ATP + H2O = L-asparagine + L-glutamate + AMP + diphosphate + H(+). It participates in amino-acid biosynthesis; L-asparagine biosynthesis; L-asparagine from L-aspartate (L-Gln route): step 1/1. In Lotus japonicus (Lotus corniculatus var. japonicus), this protein is Asparagine synthetase [glutamine-hydrolyzing] 2 (AS2).